The chain runs to 554 residues: (E)-nerolidol synthase TPS18VF (554 aa).

The (2E,6E)-farnesyl diphosphate site is built by R276, D313, D317, R455, and D458. The Mg(2+) site is built by D313 and D317. The short motif at 313-317 is the DDXXD motif element; sequence DDIFD. Residues D458, S462, and E466 each coordinate Mg(2+).

The protein belongs to the terpene synthase family. Tpsb subfamily. The cofactor is Mg(2+). Mn(2+) is required as a cofactor. As to expression, highly expressed in glandular trichomes.

It carries out the reaction (2E,6E)-farnesyl diphosphate + H2O = (6E)-nerolidol + diphosphate. It catalyses the reaction (2E)-geranyl diphosphate + H2O = (R)-linalool + diphosphate. The enzyme catalyses (2E)-geranyl diphosphate + H2O = (S)-linalool + diphosphate. It participates in secondary metabolite biosynthesis; terpenoid biosynthesis. Involved in sesquiterpene olefins biosynthesis, constituants of cannabinoids and terpenoids-rich resins. Catalyzes primarily the conversion of (2E)-farnesyl diphosphate to (E)-nerolidol, and the conversion of (2E)-geranyl diphosphate to (+)linalool and (-)linalool. The sequence is that of (E)-nerolidol synthase TPS18VF from Cannabis sativa (Hemp).